We begin with the raw amino-acid sequence, 735 residues long: Stonin-1 (735 aa).

The disordered stretch occupies residues 1–35; sequence MCSTNPGKWVTFDDDPAVQSSQKSKNFPLENQGVC. In terms of domain architecture, SHD spans 275–408; that stretch reads GWSFMLRIPE…KLPAVSKPKK (134 aa). Positions 412–715 constitute an MHD domain; that stretch reads EQEISLEIVD…ACYNIQVEIE (304 aa).

It belongs to the Stoned B family. Ubiquitous.

It localises to the cytoplasm. The protein resides in the membrane. In terms of biological role, may be involved in the endocytic machinery. The polypeptide is Stonin-1 (STON1) (Homo sapiens (Human)).